We begin with the raw amino-acid sequence, 647 residues long: Homologous recombination OB-fold protein (647 aa).

Ser-47 bears the Phosphoserine mark. Disordered regions lie at residues 284–361 (ARGT…GPQG), 380–399 (SRTP…RRFP), and 581–631 (SFLK…DDLD). An asymmetric dimethylarginine mark is found at Arg-285, Arg-295, Arg-329, and Arg-337. Polar residues predominate over residues 287-308 (TIQSSPQNRFPCQPFQSPSSWL). Positions 319-332 (TPNSSCSTPSRTSS) are enriched in low complexity. Residues 380–390 (SRTPQQPTHPS) show a composition bias toward polar residues. A compositionally biased stretch (acidic residues) spans 618 to 631 (ASPEEELPEADDLD).

In terms of assembly, interacts with MCM8; this interaction is necessary for MCM8-MCM9 helicase complex recruitment to DNA damage sites. Interacts with RPA1; this interaction associates HROB with the RPA complex.

The protein localises to the nucleus. It is found in the chromosome. DNA-binding protein involved in homologous recombination that acts by recruiting the MCM8-MCM9 helicase complex to sites of DNA damage to promote DNA repair synthesis. The sequence is that of Homologous recombination OB-fold protein from Homo sapiens (Human).